Consider the following 157-residue polypeptide: Probable succinate transporter subunit YjjB (157 aa).

Transmembrane regions (helical) follow at residues L10–V30, A55–I75, I87–I107, and F129–W149.

It belongs to the ThrE exporter (TC 2.A.79) family. As to quaternary structure, the transporter is composed of YjjB and YjjP.

The protein localises to the cell inner membrane. Functionally, involved in succinate export with YjjP. Both proteins are required for export. Participates in succinate export, but also in the export of other dicarboxylates, such as fumarate and malate. Contributes to succinate production under both aerobic and anaerobic conditions, and increases fumarate and malate production during anaerobic succinate production. The polypeptide is Probable succinate transporter subunit YjjB (Klebsiella aerogenes (strain ATCC 13048 / DSM 30053 / CCUG 1429 / JCM 1235 / KCTC 2190 / NBRC 13534 / NCIMB 10102 / NCTC 10006 / CDC 819-56) (Enterobacter aerogenes)).